The following is a 91-amino-acid chain: Defensin-like protein 269 (91 aa).

A signal peptide spans 1–25 (MAVSKTTMLIVLVAIILSCVSISNA). Intrachain disulfides connect cysteine 41–cysteine 82, cysteine 53–cysteine 72, cysteine 59–cysteine 77, and cysteine 63–cysteine 79.

It belongs to the DEFL family.

Its subcellular location is the secreted. This Arabidopsis thaliana (Mouse-ear cress) protein is Defensin-like protein 269.